Here is a 156-residue protein sequence, read N- to C-terminus: Ribosomal RNA large subunit methyltransferase H (156 aa).

Residues L73, G104, and 123–128 (LSALTL) each bind S-adenosyl-L-methionine.

This sequence belongs to the RNA methyltransferase RlmH family. As to quaternary structure, homodimer.

The protein localises to the cytoplasm. The catalysed reaction is pseudouridine(1915) in 23S rRNA + S-adenosyl-L-methionine = N(3)-methylpseudouridine(1915) in 23S rRNA + S-adenosyl-L-homocysteine + H(+). Specifically methylates the pseudouridine at position 1915 (m3Psi1915) in 23S rRNA. The protein is Ribosomal RNA large subunit methyltransferase H of Shewanella pealeana (strain ATCC 700345 / ANG-SQ1).